The chain runs to 359 residues: 3-dehydroquinate synthase (359 aa).

NAD(+)-binding positions include 71–76, 105–109, 129–130, K142, and K151; these read DGEAYK, GVIGD, and TT. Positions 184, 247, and 264 each coordinate Zn(2+).

This sequence belongs to the sugar phosphate cyclases superfamily. Dehydroquinate synthase family. It depends on Co(2+) as a cofactor. The cofactor is Zn(2+). NAD(+) is required as a cofactor.

It localises to the cytoplasm. It carries out the reaction 7-phospho-2-dehydro-3-deoxy-D-arabino-heptonate = 3-dehydroquinate + phosphate. It participates in metabolic intermediate biosynthesis; chorismate biosynthesis; chorismate from D-erythrose 4-phosphate and phosphoenolpyruvate: step 2/7. Its function is as follows. Catalyzes the conversion of 3-deoxy-D-arabino-heptulosonate 7-phosphate (DAHP) to dehydroquinate (DHQ). This is 3-dehydroquinate synthase from Burkholderia ambifaria (strain MC40-6).